A 479-amino-acid chain; its full sequence is Caspase-8 (479 aa).

The propeptide occupies 1–216; the sequence is MDFSRNLYDI…TISDSPREQD (216 aa). 2 DED domains span residues 2–80 and 100–177; these read DFSR…TYLN and AYRV…IIND. Ser-188 and Ser-211 each carry phosphoserine. Position 224 is an N6-acetyllysine (Lys-224). The active site involves His-317. Phosphotyrosine is present on Tyr-334. Cys-360 is an active-site residue. Residues 375 to 384 constitute a propeptide that is removed on maturation; sequence SEEQPYLEMD. Tyr-380 is subject to Phosphotyrosine; by SRC. Phosphoserine; by CDK1 is present on Ser-387. Arg-413 carries the post-translational modification (Microbial infection) ADP-riboxanated arginine.

The protein belongs to the peptidase C14A family. In terms of assembly, heterotetramer that consists of two anti-parallel arranged heterodimers, each one formed by a 18 kDa (p18) and a 10 kDa (p10) subunit. Component of the death-induced signaling complex (DISC) composed of cell surface receptor FAS/CD95 or TNFRSF1A, adapter protein FADD and the CASP8 protease; recruitment of CASP8 to the complex is required for processing of CASP8 into the p18 and p10 subunits. Component of the AIM2 PANoptosome complex, a multiprotein complex that drives inflammatory cell death (PANoptosis). Interacts with CFLAR and PEA15. Interacts with TNFAIP8L2. Interacts with CASP8AP2. Interacts with RFFL and RNF34; negatively regulate CASP8 through proteasomal degradation. Interacts with NOL3; decreases CASP8 activity in a mitochondria localization- and phosphorylation-dependent manner and this interaction is dissociated by calcium. Interacts with UBR2ca. Interacts with RIPK1. Interacts with stimulated TNFRSF10B; this interaction is followed by CASP8 proteolytic cleavage and activation. Interacts (phosphorylated on Tyr-380) with PIK3R1. As to quaternary structure, interacts at the endoplasmic reticulum with a complex containing BCAP31, BAP29, BCL2 and/or BCL2L1. (Microbial infection) Interacts with human cytomegalovirus/HHV-5 protein vICA/UL36; this interaction inhibits CASP8 activation. In terms of assembly, (Microbial infection) Interacts with NleF from pathogenic E.coli. As to quaternary structure, (Microbial infection) Interacts with molluscum contagiosum virus protein MC160. (Microbial infection) Interacts (via RIP homotypic interaction motif) with herpes simplex virus 1/HHV-1 protein RIR1/ICP6 (via RIP homotypic interaction motif); this interaction prevents necroptosis activation. In terms of assembly, (Microbial infection) Interacts (via RIP homotypic interaction motif) with herpes simplex virus 2/HHV-2 protein RIR1/ICP10 (via RIP homotypic interaction motif); this interaction prevents necroptosis activation. Generation of the p10 and p18 subunits requires association with the death-inducing signaling complex (DISC), whereas additional processing is likely due to the autocatalytic activity of the activated protease. GZMB and CASP10 can be involved in these processing events. In terms of processing, phosphorylation on Ser-387 during mitosis by CDK1 inhibits activation by proteolysis and prevents apoptosis. Phosphorylation on Tyr-380 by SRC is mediated by interaction with the SRC SH2 domain and does not affect dimerization or recruitment to the death-inducing signaling complex (DISC) but negatively regulates DISC-mediated processing and activation of CASP8, down-regulating its proapoptotic function. Phosphorylation on Tyr-380 also enhances localization to lamellipodia in migrating cells. Post-translationally, (Microbial infection) ADP-riboxanation by C.violaceum CopC blocks CASP8 processing, preventing CASP8 activation and ability to mediate extrinsic apoptosis. (Microbial infection) Proteolytically cleaved by the cowpox virus CRMA death inhibitory protein. In terms of tissue distribution, isoform 1, isoform 5 and isoform 7 are expressed in a wide variety of tissues. Highest expression in peripheral blood leukocytes, spleen, thymus and liver. Barely detectable in brain, testis and skeletal muscle.

The protein localises to the cytoplasm. The protein resides in the nucleus. It is found in the cell projection. Its subcellular location is the lamellipodium. It catalyses the reaction Strict requirement for Asp at position P1 and has a preferred cleavage sequence of (Leu/Asp/Val)-Glu-Thr-Asp-|-(Gly/Ser/Ala).. Its activity is regulated as follows. CASP8 activity is restricted by RIPK1. Inhibited by the effector protein NleF that is produced by pathogenic E.coli; this inhibits apoptosis. In terms of biological role, thiol protease that plays a key role in programmed cell death by acting as a molecular switch for apoptosis, necroptosis and pyroptosis, and is required to prevent tissue damage during embryonic development and adulthood. Initiator protease that induces extrinsic apoptosis by mediating cleavage and activation of effector caspases responsible for FAS/CD95-mediated and TNFRSF1A-induced cell death. Cleaves and activates effector caspases CASP3, CASP4, CASP6, CASP7, CASP9 and CASP10. Binding to the adapter molecule FADD recruits it to either receptor FAS/TNFRSF6 or TNFRSF1A. The resulting aggregate called the death-inducing signaling complex (DISC) performs CASP8 proteolytic activation. The active dimeric enzyme is then liberated from the DISC and free to activate downstream apoptotic proteases. Proteolytic fragments of the N-terminal propeptide (termed CAP3, CAP5 and CAP6) are likely retained in the DISC. In addition to extrinsic apoptosis, also acts as a negative regulator of necroptosis: acts by cleaving RIPK1 at 'Asp-324', which is crucial to inhibit RIPK1 kinase activity, limiting TNF-induced apoptosis, necroptosis and inflammatory response. Also able to initiate pyroptosis by mediating cleavage and activation of gasdermin-C and -D (GSDMC and GSDMD, respectively): gasdermin cleavage promotes release of the N-terminal moiety that binds to membranes and forms pores, triggering pyroptosis. Initiates pyroptosis following inactivation of MAP3K7/TAK1. Also acts as a regulator of innate immunity by mediating cleavage and inactivation of N4BP1 downstream of TLR3 or TLR4, thereby promoting cytokine production. May participate in the Granzyme B (GZMB) cell death pathways. Cleaves PARP1 and PARP2. Independent of its protease activity, promotes cell migration following phosphorylation at Tyr-380. Functionally, lacks the catalytic site and may interfere with the pro-apoptotic activity of the complex. Its function is as follows. Lacks the catalytic site and may interfere with the pro-apoptotic activity of the complex. Acts as an inhibitor of the caspase cascade. In Homo sapiens (Human), this protein is Caspase-8.